The primary structure comprises 717 residues: Patatin-like phospholipase domain-containing protein AO090003000839 (717 aa).

A helical membrane pass occupies residues 87-107 (WPFLFIVFGWITVLGFAYALT). Residues 277–468 (LCLSGGATFA…RTDIPIRALN (192 aa)) form the PNPLA domain. A GXSXG motif is present at residues 308–312 (GTSGG). S310 (nucleophile) is an active-site residue. D455 functions as the Proton acceptor in the catalytic mechanism. The segment at 620–696 (VSPAQSRRKR…STGNIFQEMR (77 aa)) is disordered. Basic and acidic residues predominate over residues 639–658 (MVERLDHNLPDRQPDNKEDL). Residues 660-673 (DSSGIDSNVSSRDS) show a composition bias toward low complexity.

The protein belongs to the PLPL family.

The protein resides in the membrane. In terms of biological role, probable lipid hydrolase. The sequence is that of Patatin-like phospholipase domain-containing protein AO090003000839 from Aspergillus oryzae (strain ATCC 42149 / RIB 40) (Yellow koji mold).